Consider the following 130-residue polypeptide: Small ribosomal subunit protein uS13 (130 aa).

Residues 97–116 (PVRGQRTKTNARTRRGKRKT) are compositionally biased toward basic residues. The disordered stretch occupies residues 97–130 (PVRGQRTKTNARTRRGKRKTVGAGKSTSSIKRVK). Residues 121-130 (KSTSSIKRVK) show a composition bias toward polar residues.

The protein belongs to the universal ribosomal protein uS13 family. Part of the 30S ribosomal subunit. Forms a loose heterodimer with protein S19. Forms two bridges to the 50S subunit in the 70S ribosome.

Its function is as follows. Located at the top of the head of the 30S subunit, it contacts several helices of the 16S rRNA. In the 70S ribosome it contacts the 23S rRNA (bridge B1a) and protein L5 of the 50S subunit (bridge B1b), connecting the 2 subunits; these bridges are implicated in subunit movement. Contacts the tRNAs in the A and P-sites. This Endomicrobium trichonymphae protein is Small ribosomal subunit protein uS13.